An 810-amino-acid chain; its full sequence is Exocyst complex component 6B (810 aa).

Residues 79-118 (TELLKVRGEAQKLKNQVTDTNRKLQHEGKELVIAMEELKQ) are a coiled coil. The tract at residues 258–282 (ESTSPKSEQDSGILDVEDEEDDEEV) is disordered. Positions 272-282 (DVEDEEDDEEV) are enriched in acidic residues.

Belongs to the SEC15 family. In terms of assembly, the exocyst complex is composed of SEC3, SEC5, SEC6, SEC8, SEC10, SEC15, EXO70 and EXO84.

Functionally, component of the exocyst complex involved in the docking of exocytic vesicles with fusion sites on the plasma membrane. This is Exocyst complex component 6B (Exoc6b) from Mus musculus (Mouse).